Consider the following 889-residue polypeptide: DNA gyrase subunit A (889 aa).

The Topo IIA-type catalytic domain occupies 35-501 (LPDVRDGLKP…GFEDLEDEDL (467 aa)). Tyrosine 123 (O-(5'-phospho-DNA)-tyrosine intermediate) is an active-site residue. The GyrA-box motif lies at 528–534 (QNRGGRG). The disordered stretch occupies residues 811–889 (KEDAEDETNE…IQQSSDEDEE (79 aa)). Residues 813–823 (DAEDETNEDEQ) show a composition bias toward acidic residues. A compositionally biased stretch (basic and acidic residues) spans 863–875 (DGRIEVRQDFMDR). Residues 876 to 889 (VEEDIQQSSDEDEE) are compositionally biased toward acidic residues.

It belongs to the type II topoisomerase GyrA/ParC subunit family. As to quaternary structure, heterotetramer, composed of two GyrA and two GyrB chains. In the heterotetramer, GyrA contains the active site tyrosine that forms a transient covalent intermediate with DNA, while GyrB binds cofactors and catalyzes ATP hydrolysis.

The protein localises to the cytoplasm. The catalysed reaction is ATP-dependent breakage, passage and rejoining of double-stranded DNA.. Its function is as follows. A type II topoisomerase that negatively supercoils closed circular double-stranded (ds) DNA in an ATP-dependent manner to modulate DNA topology and maintain chromosomes in an underwound state. Negative supercoiling favors strand separation, and DNA replication, transcription, recombination and repair, all of which involve strand separation. Also able to catalyze the interconversion of other topological isomers of dsDNA rings, including catenanes and knotted rings. Type II topoisomerases break and join 2 DNA strands simultaneously in an ATP-dependent manner. This chain is DNA gyrase subunit A, found in Staphylococcus aureus (strain Mu50 / ATCC 700699).